A 156-amino-acid polypeptide reads, in one-letter code: Small ribosomal subunit protein uS7 (156 aa).

This sequence belongs to the universal ribosomal protein uS7 family. Part of the 30S ribosomal subunit. Contacts proteins S9 and S11.

Its function is as follows. One of the primary rRNA binding proteins, it binds directly to 16S rRNA where it nucleates assembly of the head domain of the 30S subunit. Is located at the subunit interface close to the decoding center, probably blocks exit of the E-site tRNA. The polypeptide is Small ribosomal subunit protein uS7 (Synechococcus sp. (strain CC9902)).